The primary structure comprises 196 residues: Superantigen-like protein 11 (196 aa).

The tract at residues 65–167 (LDVFVVREGS…RVTMKNGDFY (103 aa)) is sialyl Lewis X-binding.

Belongs to the staphylococcal/streptococcal toxin family. In terms of assembly, homodimer (via its C-terminal domain). Interacts with host FCAR and SELPLG (via sialyl Lewis X).

It localises to the secreted. In terms of biological role, secreted protein that plays a role in the inhibition of host immune system. Targets myeloid cells such as monocytes or granulocytes through binding with sialyllactosamine-containing glycoproteins. Prevents initial rolling of neutrophils toward the site of infection by interacting with host SELPLG. Disrupts neutrophil motility by induction of cell adhesion via interacting with glycans but independently of SELPLG. In Staphylococcus aureus, this protein is Superantigen-like protein 11.